The following is a 173-amino-acid chain: MKSKVIVDELTMKRAITRITYEIIERNKQLDNVVLVGIKTRGVYLARRIQERLEQLESLHLAVGELDTKPFRDDMRVEEDTTSMPVDITGKDIILVDDVLYTGRTIRAAIDNLVSLGRPGRVSLAVLVDRGHRELPIRADYVGKNIPTSKTEEIVVEVVEVDGQDRISIVDPG.

The PRPP-binding motif lies at 93 to 105 (IILVDDVLYTGRT).

Belongs to the purine/pyrimidine phosphoribosyltransferase family. PyrR subfamily. Homodimer and homohexamer; in equilibrium.

It catalyses the reaction UMP + diphosphate = 5-phospho-alpha-D-ribose 1-diphosphate + uracil. Functionally, regulates transcriptional attenuation of the pyrimidine nucleotide (pyr) operon by binding in a uridine-dependent manner to specific sites on pyr mRNA. This disrupts an antiterminator hairpin in the RNA and favors formation of a downstream transcription terminator, leading to a reduced expression of downstream genes. Also displays a weak uracil phosphoribosyltransferase activity which is not physiologically significant. This Streptococcus equi subsp. zooepidemicus (strain H70) protein is Bifunctional protein PyrR.